The chain runs to 367 residues: Apurinic-apyrimidinic endonuclease 1 (367 aa).

Residues His-83, His-123, Glu-158, Asp-192, His-195, His-229, Asp-242, His-244, and Glu-274 each contribute to the Zn(2+) site. Positions 312-367 (DTLQKLGAKSRKEQLDKFEVKQKKRAGGTKRKKATAEPSDNDILSQMTKKRKTKKE) are disordered. Residues 321-332 (SRKEQLDKFEVK) are compositionally biased toward basic and acidic residues. Residues 333-344 (QKKRAGGTKRKK) are compositionally biased toward basic residues. Phosphoserine is present on Ser-356.

Belongs to the AP endonuclease 2 family. In terms of assembly, monomer. Requires Zn(2+) as cofactor.

It localises to the nucleus. Functionally, DNA repair enzyme that cleaves apurinic/apyrimidinic (AP) sites and removes 3'-blocking groups present at single strand breaks of damaged DNA. APN1 accounts for &gt; 97% of both apurinic/apyrimidinic (AP) endonuclease and DNA 3'-repair diesterase activities. The polypeptide is Apurinic-apyrimidinic endonuclease 1 (APN1) (Saccharomyces cerevisiae (strain ATCC 204508 / S288c) (Baker's yeast)).